The primary structure comprises 190 residues: dCTP deaminase (190 aa).

Residue 113–118 participates in dCTP binding; it reads KSTYAR. Glutamate 139 acts as the Proton donor/acceptor in catalysis. Positions 158, 172, 181, and 182 each coordinate dCTP.

Belongs to the dCTP deaminase family. As to quaternary structure, homotrimer.

It carries out the reaction dCTP + H2O + H(+) = dUTP + NH4(+). Its pathway is pyrimidine metabolism; dUMP biosynthesis; dUMP from dCTP (dUTP route): step 1/2. In terms of biological role, catalyzes the deamination of dCTP to dUTP. The protein is dCTP deaminase of Chlamydia trachomatis serovar A (strain ATCC VR-571B / DSM 19440 / HAR-13).